The following is a 79-amino-acid chain: Ribonuclease P protein component 1 (79 aa).

This sequence belongs to the eukaryotic/archaeal RNase P protein component 1 family. Consists of a catalytic RNA component and at least 4-5 protein subunits.

Its subcellular location is the cytoplasm. It carries out the reaction Endonucleolytic cleavage of RNA, removing 5'-extranucleotides from tRNA precursor.. Its function is as follows. Part of ribonuclease P, a protein complex that generates mature tRNA molecules by cleaving their 5'-ends. The polypeptide is Ribonuclease P protein component 1 (Saccharolobus solfataricus (strain ATCC 35092 / DSM 1617 / JCM 11322 / P2) (Sulfolobus solfataricus)).